A 233-amino-acid polypeptide reads, in one-letter code: Ion-translocating oxidoreductase complex subunit E (233 aa).

A run of 6 helical transmembrane segments spans residues 18–38 (ALVQLLGLCPLLAVSSTATNA), 39–59 (LGLGLATTLVLVCTNTAVSAL), 69–89 (IPIYVMIIASVVSTVQMLINA), 92–112 (FGLYQSLGIFIPLIVTNCIVI), 128–148 (ALDGFAMGMGATCALFVLGAL), and 182–202 (PFLLAMLPPGAFIGLGLLLAG).

Belongs to the NqrDE/RnfAE family. As to quaternary structure, the complex is composed of six subunits: RnfA, RnfB, RnfC, RnfD, RnfE and RnfG.

The protein localises to the cell inner membrane. Part of a membrane-bound complex that couples electron transfer with translocation of ions across the membrane. The chain is Ion-translocating oxidoreductase complex subunit E from Yersinia pseudotuberculosis serotype IB (strain PB1/+).